We begin with the raw amino-acid sequence, 82 residues long: Small ribosomal subunit protein bS16 (82 aa).

Belongs to the bacterial ribosomal protein bS16 family.

This chain is Small ribosomal subunit protein bS16, found in Vibrio vulnificus (strain CMCP6).